Reading from the N-terminus, the 400-residue chain is Acetate kinase (400 aa).

Asn-7 provides a ligand contact to Mg(2+). Residue Lys-14 coordinates ATP. Arg-92 serves as a coordination point for substrate. The active-site Proton donor/acceptor is Asp-149. Residues His-209 to Gly-213, Asp-283 to Arg-285, and Gly-331 to Asn-335 contribute to the ATP site. Residue Glu-385 coordinates Mg(2+).

This sequence belongs to the acetokinase family. In terms of assembly, homodimer. It depends on Mg(2+) as a cofactor. Mn(2+) serves as cofactor.

It is found in the cytoplasm. It catalyses the reaction acetate + ATP = acetyl phosphate + ADP. Its pathway is metabolic intermediate biosynthesis; acetyl-CoA biosynthesis; acetyl-CoA from acetate: step 1/2. Its function is as follows. Catalyzes the formation of acetyl phosphate from acetate and ATP. Can also catalyze the reverse reaction. The polypeptide is Acetate kinase (Helicobacter acinonychis (strain Sheeba)).